A 482-amino-acid polypeptide reads, in one-letter code: Dihydrolipoyllysine-residue acetyltransferase component of pyruvate dehydrogenase complex, mitochondrial (482 aa).

The transit peptide at 1–28 directs the protein to the mitochondrion; sequence MSAFVRVVPRISRSSVLTRSLRLQLRCY. The Lipoyl-binding domain occupies 34-110; the sequence is HTIIGMPALS…PVNKPIAVYV (77 aa). N6-lipoyllysine is present on Lys75. Residues 122–170 are disordered; sequence FKLEDSGSDSKTSTKAQPAEPQAEKKQEAPAEETKTSAPEAKKSDVAAP. Over residues 143 to 166 the composition is skewed to basic and acidic residues; it reads QAEKKQEAPAEETKTSAPEAKKSD. The Peripheral subunit-binding (PSBD) domain maps to 175–212; it reads FASPLAKTIALEKGISLKDVHGTGPRGRITKADIESYL. A disordered region spans residues 214 to 251; the sequence is KSSKQSSQTSGAAAATPAAATSSTTAGSAPSPSSTASY. Low complexity predominate over residues 217–250; that stretch reads KQSSQTSGAAAATPAAATSSTTAGSAPSPSSTAS. Residues His455 and Asp459 contribute to the active site.

It belongs to the 2-oxoacid dehydrogenase family. As to quaternary structure, eukaryotic pyruvate dehydrogenase (PDH) complexes are organized as a core consisting of the oligomeric dihydrolipoamide acetyl-transferase (E2), around which are arranged multiple copies of pyruvate dehydrogenase (E1), dihydrolipoamide dehydrogenase (E3) and protein X (E3BP) bound by non-covalent bonds. The cofactor is (R)-lipoate.

Its subcellular location is the mitochondrion matrix. It carries out the reaction N(6)-[(R)-dihydrolipoyl]-L-lysyl-[protein] + acetyl-CoA = N(6)-[(R)-S(8)-acetyldihydrolipoyl]-L-lysyl-[protein] + CoA. In terms of biological role, the pyruvate dehydrogenase complex catalyzes the overall conversion of pyruvate to acetyl-CoA and CO(2). This is Dihydrolipoyllysine-residue acetyltransferase component of pyruvate dehydrogenase complex, mitochondrial (LAT1) from Saccharomyces cerevisiae (strain ATCC 204508 / S288c) (Baker's yeast).